A 404-amino-acid chain; its full sequence is Formate-dependent phosphoribosylglycinamide formyltransferase (404 aa).

N(1)-(5-phospho-beta-D-ribosyl)glycinamide-binding positions include 27–28 and E87; that span reads EL. Residues R120, K162, 167–172, 202–205, and E210 contribute to the ATP site; these read SSGKGQ and EGFI. One can recognise an ATP-grasp domain in the interval 125–320; that stretch reads RLAAETLGLP…EFELHARALL (196 aa). Mg(2+)-binding residues include E279 and E291. Residues D298, K367, and 374–375 contribute to the N(1)-(5-phospho-beta-D-ribosyl)glycinamide site; that span reads RR.

This sequence belongs to the PurK/PurT family. Homodimer.

The catalysed reaction is N(1)-(5-phospho-beta-D-ribosyl)glycinamide + formate + ATP = N(2)-formyl-N(1)-(5-phospho-beta-D-ribosyl)glycinamide + ADP + phosphate + H(+). It functions in the pathway purine metabolism; IMP biosynthesis via de novo pathway; N(2)-formyl-N(1)-(5-phospho-D-ribosyl)glycinamide from N(1)-(5-phospho-D-ribosyl)glycinamide (formate route): step 1/1. In terms of biological role, involved in the de novo purine biosynthesis. Catalyzes the transfer of formate to 5-phospho-ribosyl-glycinamide (GAR), producing 5-phospho-ribosyl-N-formylglycinamide (FGAR). Formate is provided by PurU via hydrolysis of 10-formyl-tetrahydrofolate. The sequence is that of Formate-dependent phosphoribosylglycinamide formyltransferase from Bordetella pertussis (strain Tohama I / ATCC BAA-589 / NCTC 13251).